A 324-amino-acid polypeptide reads, in one-letter code: Glyoxylate/hydroxypyruvate reductase B (324 aa).

Active-site residues include arginine 237 and glutamate 266. Residue histidine 285 is the Proton donor of the active site.

The protein belongs to the D-isomer specific 2-hydroxyacid dehydrogenase family. GhrB subfamily. Homodimer.

Its subcellular location is the cytoplasm. It catalyses the reaction glycolate + NADP(+) = glyoxylate + NADPH + H(+). The catalysed reaction is (R)-glycerate + NAD(+) = 3-hydroxypyruvate + NADH + H(+). It carries out the reaction (R)-glycerate + NADP(+) = 3-hydroxypyruvate + NADPH + H(+). Functionally, catalyzes the NADPH-dependent reduction of glyoxylate and hydroxypyruvate into glycolate and glycerate, respectively. In Escherichia coli O17:K52:H18 (strain UMN026 / ExPEC), this protein is Glyoxylate/hydroxypyruvate reductase B.